The following is a 595-amino-acid chain: Thiol:disulfide interchange protein DsbD (595 aa).

Positions 1–24 (MAQRFITLILLLCSVLLAPHSAQS) are cleaved as a signal peptide. The cysteines at positions 134 and 140 are disulfide-linked. Residues 166 to 186 (NSSATVNPPATTQPEGDATPV) are disordered. Helical transmembrane passes span 197-217 (ALLIGIGIAFTPCVLPMYPLI), 233-253 (ILILAVVYVQGMALTYTLLGL), 270-290 (YVLIGLSVLFVLLALSMFGLY), 311-331 (GGSLAGVFAMGALAGLICSPC), 332-352 (TTAPLSAILLYIAQSGNMLAG), 353-373 (GGTLYLYALGMGIPLVVVTLF), 384-404 (WMQYVKEAFGFVILALPVFLL), 411-431 (VWGLRLWSLLAVAFFGWAFVL), and 435-455 (AHAGWVRVCQLLLLAALLIVA). A disulfide bridge links C209 with C331. A Thioredoxin domain is found at 452–592 (LIVARPLQDW…FLQHLQNTPA (141 aa)). C507 and C510 form a disulfide bridge.

This sequence belongs to the thioredoxin family. DsbD subfamily.

The protein localises to the cell inner membrane. The catalysed reaction is [protein]-dithiol + NAD(+) = [protein]-disulfide + NADH + H(+). It carries out the reaction [protein]-dithiol + NADP(+) = [protein]-disulfide + NADPH + H(+). Its function is as follows. Required to facilitate the formation of correct disulfide bonds in some periplasmic proteins and for the assembly of the periplasmic c-type cytochromes. Acts by transferring electrons from cytoplasmic thioredoxin to the periplasm. This transfer involves a cascade of disulfide bond formation and reduction steps. The sequence is that of Thiol:disulfide interchange protein DsbD from Yersinia pestis bv. Antiqua (strain Nepal516).